A 343-amino-acid chain; its full sequence is Heat-inducible transcription repressor HrcA (343 aa).

It belongs to the HrcA family.

Its function is as follows. Negative regulator of class I heat shock genes (grpE-dnaK-dnaJ and groELS operons). Prevents heat-shock induction of these operons. The chain is Heat-inducible transcription repressor HrcA from Caldanaerobacter subterraneus subsp. tengcongensis (strain DSM 15242 / JCM 11007 / NBRC 100824 / MB4) (Thermoanaerobacter tengcongensis).